Consider the following 257-residue polypeptide: MVLIRVLANLLILQLSYAQRSSELVIGGDECNINEHRFLALVYTDRFQCGGTLINPEWVLTAAHCDRRYMHIYLGVHNESVQYDDEQRRFPKKKYFCLSSKNYTRWDKDIMLIRLNRPVRNSAHIAHLSLPSKPPSVGSVCRVMGWGTITSPNETLPDVPRCANINLFNYTVCRGVFPWLPARSRILCAGVLQGGIDTCKRDSGGPLICNGQFQGIVSWGPKPCAQPREPALYTKVFDHLDWIQSIIAGNTTVTCPP.

The N-terminal stretch at 1 to 18 (MVLIRVLANLLILQLSYA) is a signal peptide. The propeptide occupies 19–24 (QRSSEL). The 224-residue stretch at 25–248 (VIGGDECNIN…HLDWIQSIIA (224 aa)) folds into the Peptidase S1 domain. Cystine bridges form between Cys31/Cys162, Cys49/Cys65, Cys141/Cys209, Cys173/Cys188, and Cys199/Cys224. The Charge relay system role is filled by His64. 2 N-linked (GlcNAc...) asparagine glycosylation sites follow: Asn78 and Asn102. Asp109 acts as the Charge relay system in catalysis. N-linked (GlcNAc...) asparagine glycosylation is found at Asn153 and Asn169. The active-site Charge relay system is Ser203. An N-linked (GlcNAc...) asparagine glycan is attached at Asn250.

It belongs to the peptidase S1 family. Snake venom subfamily. In terms of assembly, monomer. As to expression, expressed by the venom gland.

The protein localises to the secreted. Its function is as follows. Snake venom serine protease that may act in the hemostasis system of the prey. In Trimeresurus stejnegeri (Chinese green tree viper), this protein is Snake venom serine protease CL5.